We begin with the raw amino-acid sequence, 303 residues long: Probable 5-dehydro-4-deoxyglucarate dehydratase (303 aa).

The protein belongs to the DapA family.

It catalyses the reaction 5-dehydro-4-deoxy-D-glucarate + H(+) = 2,5-dioxopentanoate + CO2 + H2O. It functions in the pathway carbohydrate acid metabolism; D-glucarate degradation; 2,5-dioxopentanoate from D-glucarate: step 2/2. The chain is Probable 5-dehydro-4-deoxyglucarate dehydratase from Pseudomonas savastanoi pv. phaseolicola (strain 1448A / Race 6) (Pseudomonas syringae pv. phaseolicola (strain 1448A / Race 6)).